A 38-amino-acid polypeptide reads, in one-letter code: Large ribosomal subunit protein bL36A (38 aa).

This sequence belongs to the bacterial ribosomal protein bL36 family.

In Prochlorococcus marinus (strain MIT 9515), this protein is Large ribosomal subunit protein bL36A.